A 234-amino-acid polypeptide reads, in one-letter code: Ribosomal RNA large subunit methyltransferase E (234 aa).

The tract at residues 1 to 37 is disordered; that stretch reads MSDDDRRRWKGPGPERQDSGRRSTERKVIARNARTES. S-adenosyl-L-methionine-binding residues include Gly91, Trp93, Asp109, Asp125, and Asp149. The active-site Proton acceptor is Lys189.

Belongs to the class I-like SAM-binding methyltransferase superfamily. RNA methyltransferase RlmE family.

The protein localises to the cytoplasm. The enzyme catalyses uridine(2552) in 23S rRNA + S-adenosyl-L-methionine = 2'-O-methyluridine(2552) in 23S rRNA + S-adenosyl-L-homocysteine + H(+). Specifically methylates the uridine in position 2552 of 23S rRNA at the 2'-O position of the ribose in the fully assembled 50S ribosomal subunit. The chain is Ribosomal RNA large subunit methyltransferase E from Hyphomonas neptunium (strain ATCC 15444).